The primary structure comprises 387 residues: L-aspartate:5-guanidino-3-methyl-2-oxopentanoate transaminase (387 aa).

An N6-(pyridoxal phosphate)lysine modification is found at lysine 237.

Belongs to the class-I pyridoxal-phosphate-dependent aminotransferase family. Pyridoxal 5'-phosphate is required as a cofactor.

It catalyses the reaction (3R)-5-guanidino-3-methyl-2-oxopentanoate + L-aspartate = (3R)-3-methyl-L-arginine + oxaloacetate. It participates in antibiotic biosynthesis. Aminotransferase involved in the formation of the rare amino acid 3-methylarginine (MeArg), which is used as a potent antibiotic against the closely related soybean pathogen P.syringae pv. glycinea. Probably catalyzes transamination from the donor L-aspartate to 5-guanidino-3-methyl-2-oxopentanoic acid, generating 3-methylarginine. The protein is L-aspartate:5-guanidino-3-methyl-2-oxopentanoate transaminase of Pseudomonas syringae pv. syringae.